The chain runs to 564 residues: Zyxin (564 aa).

Alanine 2 is subject to N-acetylalanine. A disordered region spans residues 30-141 (VAPKPKVNPF…TQLPPQPREK (112 aa)). 2 stretches are compositionally biased toward pro residues: residues 63–78 (IPPPPPEDFPLPPPPL) and 93–109 (FPPPPPPMIEEPFPPAP). A phosphoserine mark is found at serine 117, serine 144, serine 170, and serine 171. The segment at 162–344 (NDPFKARVSS…RSPGGPGPLT (183 aa)) is disordered. 2 stretches are compositionally biased toward pro residues: residues 174-189 (VPPPVATPFVPKPSTK) and 197-214 (PLPPWKTPSSSQPPPQPQ). Threonine 180 carries the post-translational modification Phosphothreonine. Positions 234-243 (QPVSSANTQP) are enriched in polar residues. The residue at position 244 (arginine 244) is an Asymmetric dimethylarginine. Positions 255-275 (PKFAPVAPKFTPVVSKFSPGA) are enriched in low complexity. 2 positions are modified to N6-acetyllysine: lysine 256 and lysine 263. At threonine 265 the chain carries Phosphothreonine. The residue at position 270 (lysine 270) is an N6-acetyllysine. Residues serine 272 and serine 300 each carry the phosphoserine modification. Polar residues predominate over residues 294–310 (SSVSTGSPQPPSFTYAQ). Positions 311–322 (QKEKPLVQEKQH) are enriched in basic and acidic residues. Phosphoserine is present on serine 336. 3 consecutive LIM zinc-binding domains span residues 376–435 (CGKC…TLEK), 436–495 (CNTC…YAPR), and 496–562 (CSVC…SARA).

It belongs to the zyxin/ajuba family. In terms of assembly, interacts, via the Pro-rich regions, with the EVH1 domains of ENAH, EVL and VASP. Interacts with the first LIM domain of TES. Interacts with SYNPO2.

Its subcellular location is the cytoplasm. It is found in the cytoskeleton. It localises to the cell junction. The protein localises to the focal adhesion. The protein resides in the nucleus. In terms of biological role, adhesion plaque protein. Binds alpha-actinin and the CRP protein. Important for targeting TES and ENA/VASP family members to focal adhesions and for the formation of actin-rich structures. May be a component of a signal transduction pathway that mediates adhesion-stimulated changes in gene expression. This Mus musculus (Mouse) protein is Zyxin (Zyx).